The following is a 420-amino-acid chain: Glucose-1-phosphate adenylyltransferase (420 aa).

Residues Tyr-107, Gly-172, 187 to 188, and Ser-205 each bind alpha-D-glucose 1-phosphate; that span reads EK.

This sequence belongs to the bacterial/plant glucose-1-phosphate adenylyltransferase family. Homotetramer.

The enzyme catalyses alpha-D-glucose 1-phosphate + ATP + H(+) = ADP-alpha-D-glucose + diphosphate. It participates in glycan biosynthesis; glycogen biosynthesis. Involved in the biosynthesis of ADP-glucose, a building block required for the elongation reactions to produce glycogen. Catalyzes the reaction between ATP and alpha-D-glucose 1-phosphate (G1P) to produce pyrophosphate and ADP-Glc. This is Glucose-1-phosphate adenylyltransferase from Rhizobium leguminosarum bv. trifolii (strain WSM2304).